We begin with the raw amino-acid sequence, 190 residues long: Lipid A acyltransferase PagP (190 aa).

An N-terminal signal peptide occupies residues Met-1–Ala-29. Residues His-62, Asp-105, and Ser-106 contribute to the active site.

The protein belongs to the lipid A palmitoyltransferase family. As to quaternary structure, homodimer.

The protein resides in the cell outer membrane. It catalyses the reaction a lipid A + a 1,2-diacyl-sn-glycero-3-phosphocholine = a hepta-acyl lipid A + a 2-acyl-sn-glycero-3-phosphocholine. The catalysed reaction is a lipid IVA + a 1,2-diacyl-sn-glycero-3-phosphocholine = a lipid IVB + a 2-acyl-sn-glycero-3-phosphocholine. The enzyme catalyses a lipid IIA + a 1,2-diacyl-sn-glycero-3-phosphocholine = a lipid IIB + a 2-acyl-sn-glycero-3-phosphocholine. Its function is as follows. Transfers a fatty acid residue from the sn-1 position of a phospholipid to the N-linked hydroxyfatty acid chain on the proximal unit of lipid A or its precursors. The polypeptide is Lipid A acyltransferase PagP (Salmonella typhi).